We begin with the raw amino-acid sequence, 473 residues long: Aspartyl/glutamyl-tRNA(Asn/Gln) amidotransferase subunit B (473 aa).

This sequence belongs to the GatB/GatE family. GatB subfamily. In terms of assembly, heterotrimer of A, B and C subunits.

It catalyses the reaction L-glutamyl-tRNA(Gln) + L-glutamine + ATP + H2O = L-glutaminyl-tRNA(Gln) + L-glutamate + ADP + phosphate + H(+). The enzyme catalyses L-aspartyl-tRNA(Asn) + L-glutamine + ATP + H2O = L-asparaginyl-tRNA(Asn) + L-glutamate + ADP + phosphate + 2 H(+). Functionally, allows the formation of correctly charged Asn-tRNA(Asn) or Gln-tRNA(Gln) through the transamidation of misacylated Asp-tRNA(Asn) or Glu-tRNA(Gln) in organisms which lack either or both of asparaginyl-tRNA or glutaminyl-tRNA synthetases. The reaction takes place in the presence of glutamine and ATP through an activated phospho-Asp-tRNA(Asn) or phospho-Glu-tRNA(Gln). The polypeptide is Aspartyl/glutamyl-tRNA(Asn/Gln) amidotransferase subunit B (Sulfurisphaera tokodaii (strain DSM 16993 / JCM 10545 / NBRC 100140 / 7) (Sulfolobus tokodaii)).